We begin with the raw amino-acid sequence, 93 residues long: Small ribosomal subunit protein uS15 (93 aa).

Belongs to the universal ribosomal protein uS15 family. Part of the 30S ribosomal subunit. Forms a bridge to the 50S subunit in the 70S ribosome, contacting the 23S rRNA.

Functionally, one of the primary rRNA binding proteins, it binds directly to 16S rRNA where it helps nucleate assembly of the platform of the 30S subunit by binding and bridging several RNA helices of the 16S rRNA. In terms of biological role, forms an intersubunit bridge (bridge B4) with the 23S rRNA of the 50S subunit in the ribosome. The protein is Small ribosomal subunit protein uS15 of Ehrlichia ruminantium (strain Gardel).